Here is a 115-residue protein sequence, read N- to C-terminus: Large ribosomal subunit protein bL19 (115 aa).

Belongs to the bacterial ribosomal protein bL19 family.

This protein is located at the 30S-50S ribosomal subunit interface and may play a role in the structure and function of the aminoacyl-tRNA binding site. This Francisella philomiragia subsp. philomiragia (strain ATCC 25017 / CCUG 19701 / FSC 153 / O#319-036) protein is Large ribosomal subunit protein bL19.